We begin with the raw amino-acid sequence, 213 residues long: Orotate phosphoribosyltransferase (213 aa).

5-phospho-alpha-D-ribose 1-diphosphate is bound at residue lysine 26. 34 to 35 (FF) serves as a coordination point for orotate. 5-phospho-alpha-D-ribose 1-diphosphate-binding positions include 72–73 (YK), arginine 98, lysine 99, lysine 102, histidine 104, and 123–131 (DDVISAGTS). Orotate is bound by residues serine 127 and arginine 155.

Belongs to the purine/pyrimidine phosphoribosyltransferase family. PyrE subfamily. As to quaternary structure, homodimer. The cofactor is Mg(2+).

The enzyme catalyses orotidine 5'-phosphate + diphosphate = orotate + 5-phospho-alpha-D-ribose 1-diphosphate. Its pathway is pyrimidine metabolism; UMP biosynthesis via de novo pathway; UMP from orotate: step 1/2. In terms of biological role, catalyzes the transfer of a ribosyl phosphate group from 5-phosphoribose 1-diphosphate to orotate, leading to the formation of orotidine monophosphate (OMP). This Neisseria meningitidis serogroup A / serotype 4A (strain DSM 15465 / Z2491) protein is Orotate phosphoribosyltransferase.